A 184-amino-acid polypeptide reads, in one-letter code: UPF0398 protein BAA_1648 (184 aa).

The protein belongs to the UPF0398 family.

The protein is UPF0398 protein BAA_1648 of Bacillus anthracis (strain A0248).